We begin with the raw amino-acid sequence, 291 residues long: 4-hydroxy-tetrahydrodipicolinate synthase (291 aa).

Thr47 serves as a coordination point for pyruvate. The active-site Proton donor/acceptor is Tyr134. The active-site Schiff-base intermediate with substrate is Lys162. Ile205 serves as a coordination point for pyruvate.

It belongs to the DapA family. Homotetramer; dimer of dimers.

The protein resides in the cytoplasm. The enzyme catalyses L-aspartate 4-semialdehyde + pyruvate = (2S,4S)-4-hydroxy-2,3,4,5-tetrahydrodipicolinate + H2O + H(+). Its pathway is amino-acid biosynthesis; L-lysine biosynthesis via DAP pathway; (S)-tetrahydrodipicolinate from L-aspartate: step 3/4. Functionally, catalyzes the condensation of (S)-aspartate-beta-semialdehyde [(S)-ASA] and pyruvate to 4-hydroxy-tetrahydrodipicolinate (HTPA). The polypeptide is 4-hydroxy-tetrahydrodipicolinate synthase (Methanoculleus marisnigri (strain ATCC 35101 / DSM 1498 / JR1)).